Reading from the N-terminus, the 343-residue chain is MLNLTKLHCNGDPEMAKKYNRGVKLAISLAESTPGQFKLIESPVNSFLIVTNLTVEDTVPHATHPPAGEGLDFSCLSLSRLNALDAIVQPGYDNNSLDAQGHQQPPPAGVRSLTKLTKDPYVTYKLTEWMWALRLNKDILINQALKLLGNPSTWTFCHPTDPLPWMWLLFYGPRSRCQEATCVYAKYFSTAGPVLLPPFFYDPGRDIQSFMSQACKFVKYFYDGEGLDSVLKDNNVPFDDSRIAEVLKALPSVSGSGLVLNKSCLLCCIYKQNLTSFHNVPDVSGGCLILQGAERHTDSAIGRSRCQTTGDIILWPSYNINSLVALFKSNEPSINERADTPGH.

The protein is Gene 34 protein (34) of Alcelaphine herpesvirus 1 (strain C500) (AlHV-1).